A 150-amino-acid chain; its full sequence is Ribosome maturation factor RimP (150 aa).

This sequence belongs to the RimP family.

It localises to the cytoplasm. Required for maturation of 30S ribosomal subunits. This chain is Ribosome maturation factor RimP, found in Hahella chejuensis (strain KCTC 2396).